A 373-amino-acid chain; its full sequence is Queuine tRNA-ribosyltransferase (373 aa).

Aspartate 94 acts as the Proton acceptor in catalysis. Residues 94 to 98 (DSGGF), aspartate 148, glutamine 191, and glycine 218 each bind substrate. The tract at residues 249-255 (GVGTPDY) is RNA binding. Aspartate 268 functions as the Nucleophile in the catalytic mechanism. The interval 273–277 (TRIGR) is RNA binding; important for wobble base 34 recognition. Zn(2+)-binding residues include cysteine 306, cysteine 308, cysteine 311, and histidine 337.

It belongs to the queuine tRNA-ribosyltransferase family. Homodimer. Within each dimer, one monomer is responsible for RNA recognition and catalysis, while the other monomer binds to the replacement base PreQ1. Zn(2+) serves as cofactor.

The catalysed reaction is 7-aminomethyl-7-carbaguanine + guanosine(34) in tRNA = 7-aminomethyl-7-carbaguanosine(34) in tRNA + guanine. It participates in tRNA modification; tRNA-queuosine biosynthesis. Its function is as follows. Catalyzes the base-exchange of a guanine (G) residue with the queuine precursor 7-aminomethyl-7-deazaguanine (PreQ1) at position 34 (anticodon wobble position) in tRNAs with GU(N) anticodons (tRNA-Asp, -Asn, -His and -Tyr). Catalysis occurs through a double-displacement mechanism. The nucleophile active site attacks the C1' of nucleotide 34 to detach the guanine base from the RNA, forming a covalent enzyme-RNA intermediate. The proton acceptor active site deprotonates the incoming PreQ1, allowing a nucleophilic attack on the C1' of the ribose to form the product. After dissociation, two additional enzymatic reactions on the tRNA convert PreQ1 to queuine (Q), resulting in the hypermodified nucleoside queuosine (7-(((4,5-cis-dihydroxy-2-cyclopenten-1-yl)amino)methyl)-7-deazaguanosine). The protein is Queuine tRNA-ribosyltransferase of Ruminiclostridium cellulolyticum (strain ATCC 35319 / DSM 5812 / JCM 6584 / H10) (Clostridium cellulolyticum).